We begin with the raw amino-acid sequence, 318 residues long: Cell surface sensor SHO1 (318 aa).

Positions 1 to 23 are disordered; the sequence is MPSYGSLHSPSLRKMEHSRGQYG. The Cytoplasmic portion of the chain corresponds to 1–38; the sequence is MPSYGSLHSPSLRKMEHSRGQYGGGRKGMSLGNVIGDP. A helical transmembrane segment spans residues 39 to 59; sequence FALATISIAGLAWLIAFIASI. At 60-71 the chain is on the extracellular side; sequence VAQIQTTQGFPT. A helical membrane pass occupies residues 72-92; it reads YTWWTVVFYFFLIPGVFVVVA. The Cytoplasmic segment spans residues 93 to 100; sequence SDTIQTYH. A helical membrane pass occupies residues 101 to 121; sequence VALVGYMACGLVLTTSSVNGL. Residues 122–130 are Extracellular-facing; it reads VYSTNGAKE. Residues 131–151 form a helical membrane-spanning segment; that stretch reads AAAAGFILLSMVTIVWIFYFG. Residues 152–318 are Cytoplasmic-facing; it reads SAPSAMPRAY…IAPSNYLILL (167 aa). The disordered stretch occupies residues 172–255; sequence TSNNRQTMTG…AGGAADAEIV (84 aa). A compositionally biased stretch (polar residues) spans 190–214; it reads ETSTSVQPPQMYTSAQLNGFENPSP. Positions 237–250 are enriched in low complexity; it reads GLPKTTTPPAGGAA. Positions 259–318 constitute an SH3 domain; it reads EYPYRAKAIYTYEANPDDANEISFSKHEILEVSDVSGRWWQARKETGETGIAPSNYLILL.

This sequence belongs to the SHO1 family. Forms homooligomers.

It localises to the cell membrane. Its function is as follows. MSB2 and SHO1 have overlapping functions in recognizing various surface signals for MAPK PMK1 activation and appressorium formation. While MSB2 is critical for sensing surface hydrophobicity and cutin monomers, SHO1 may play a more important role in recognizing rice leaf waxes. In Pyricularia oryzae (strain 70-15 / ATCC MYA-4617 / FGSC 8958) (Rice blast fungus), this protein is Cell surface sensor SHO1.